The primary structure comprises 407 residues: Substance-P receptor (407 aa).

Residues 1–31 (MDNVLQVDSDLFPNISTNTSEPNQFVQPAWQ) are Extracellular-facing. N-linked (GlcNAc...) asparagine glycosylation is found at asparagine 14 and asparagine 18. The chain crosses the membrane as a helical span at residues 32–54 (IVLWAAAYTVIVVTSVVGNVVVM). Topologically, residues 55-64 (WIILAHKRMR) are cytoplasmic. The chain crosses the membrane as a helical span at residues 65–86 (TVTNYFLVNLAFAEASMAAFNT). The Extracellular segment spans residues 87-106 (VVNFTYAVHNEWYYGLFYCK). A disulfide bond links cysteine 105 and cysteine 180. The chain crosses the membrane as a helical span at residues 107 to 128 (FHNFFPIAAVFASIYSMTAVAF). The Cytoplasmic segment spans residues 129–148 (DRYMAIIHPLQPRLSATATK). The chain crosses the membrane as a helical span at residues 149-169 (VVICVIWVLALLLAFPQGYYS). Topologically, residues 170 to 194 (TTETMPNRVVCMIEWPEHPNKIYEK) are extracellular. Residues 195 to 219 (VYHICVTVLIYFLPLLVIGYAYTVV) traverse the membrane as a helical segment. Residues 220–248 (GITLWASEIPGDSSDRYHEQVSAKRKVVK) lie on the Cytoplasmic side of the membrane. A helical membrane pass occupies residues 249–270 (MMIVVVCTFAICWLPFHIFFLL). The Extracellular segment spans residues 271–283 (PYINPDLYLEKFI). A helical membrane pass occupies residues 284-308 (QQVYLAIMWLAMSSTMYNPIIYCCL). The Cytoplasmic segment spans residues 309 to 407 (NDRFRLGFKH…SFSFYSNMLS (99 aa)). A lipid anchor (S-palmitoyl cysteine) is attached at cysteine 322. Positions 365–394 (HEEELEDGPKTTPSSLDLTSNGSSRSDSKT) are disordered. The span at 375–394 (TTPSSLDLTSNGSSRSDSKT) shows a compositional bias: polar residues.

Belongs to the G-protein coupled receptor 1 family. In terms of assembly, interacts with ARRB1.

Its subcellular location is the cell membrane. Functionally, this is a receptor for the tachykinin neuropeptide substance P. It is probably associated with G proteins that activate a phosphatidylinositol-calcium second messenger system. This is Substance-P receptor (TACR1) from Canis lupus familiaris (Dog).